The chain runs to 1735 residues: Cadherin-AgCad1 (1735 aa).

An N-terminal signal peptide occupies residues 1–30; it reads MKCVASKFNMWLHLGWLLGLLLVLLPLVRC. Residues 31–1574 lie on the Extracellular side of the membrane; it reads QGWGEPRFET…ALTEADETLQ (1544 aa). The extracellular domain (EC) stretch occupies residues 166–1456; it reads VTDCLFNVYH…KVYIVSESNR (1291 aa). 11 consecutive Cadherin domains span residues 171–273, 280–378, 379–498, 499–620, 621–757, 767–866, 879–983, 985–1109, 1136–1235, 1255–1350, and 1351–1461; these read FNVY…PPIF, ERIM…IPEI, YMKP…VPKF, GRDE…PPQI, TLPR…APYF, SVKE…QPYH, EKIP…TPKL, ELAA…TPSI, GSPL…EPTF, AEDP…PPVF, and QQRL…TFVF. Short sequence motifs (toxin-binding receptor motif) lie at residues 1344-1350 and 1446-1456; these read NDNPPVF and AKVYIVSESNR. The segment at 1358–1569 is CR11-MPED, increases toxicity of activated Cry4B toxin, peptide alone is not toxic; sequence GITTNDRVPK…PLATEALTEA (212 aa). The tract at residues 1457 to 1569 is membrane-proximal EC domain (MPED); sequence VTFVFLNSVE…PLATEALTEA (113 aa). A helical membrane pass occupies residues 1575-1595; that stretch reads IILIVVSAALAVLCVILFVAF. Over 1596-1735 the chain is Cytoplasmic; the sequence is FIKIRSLNRQ…ETDDELSHRF (140 aa). Over residues 1701–1719 the composition is skewed to polar residues; that stretch reads SLNPMANGTDKSNDGAPTS. The interval 1701–1735 is disordered; that stretch reads SLNPMANGTDKSNDGAPTSNHKKLDETDDELSHRF. Residues 1722–1735 are compositionally biased toward basic and acidic residues; sequence KKLDETDDELSHRF.

In terms of tissue distribution, larval midgut (at protein level).

It is found in the apical cell membrane. The protein localises to the cell projection. The protein resides in the microvillus membrane. Cadherins are calcium-dependent cell adhesion proteins. They preferentially interact with themselves in a homophilic manner in connecting cells. In terms of biological role, (Microbial infection) Binds to and is probably the functional receptor for B.thuringiensis subsp. israelensis (Bti) insecticidal toxin Cry4B. Trichoplusia ni insect cells stably transfected with this protein become suspectible to Cry4B; cells undergo oncosis, they bleb and ruffle after 20-40 minutes, swell after 40-60 minutes and lyse after 90 minutes. Following toxin treatment in the T.in insect system levels of intracellular 3',5'-cyclic AMP (cAMP) rise 12.5-fold; EDTA but not EGTA pretreatment prevents cAMP increase. Inorganic phosphate also rises 3.4-fold after toxin treatment. This chain is Cadherin-AgCad1, found in Anopheles gambiae (African malaria mosquito).